The sequence spans 200 residues: DNA-binding protein HupB (200 aa).

The tract at residues M1–A90 is bacterial histone-like domain. Residues K3, K72, K86, K103, K137, K144, and K156 each carry the N6-acetyllysine modification. The tract at residues A101–K200 is degenerate repeats region. Residues A179–K200 form a disordered region.

Belongs to the bacterial histone-like protein family. Long actinobacterial subfamily. In terms of assembly, binds to human laminin-2. Post-translationally, may also be methylated and possibly phosphorylated in vivo.

The protein resides in the cytoplasm. It localises to the nucleoid. Its subcellular location is the secreted. It is found in the cell wall. The protein localises to the cell surface. It catalyses the reaction 4 Fe(2+) + O2 + 4 H(+) = 4 Fe(3+) + 2 H2O. In terms of biological role, a nucleoid-associated protein (NAP) that plays a role in local chromosome architecture and chromosome compactation. Required for biofilm formation, stress survival and possibly in cell wall assembly, probably influences transcription. RNase E and HupB jointly contribute to cellular adaptation to changing growth conditions and survival during antibiotic treatment and in the host. Functionally, binds Fe(3+) but not Fe(2+). Has ferroxidase activity, converts Fe(2+) into Fe(3+) and in the presence of H(2)O(2) prevents the generation of hydroxyl radicals (the Fenton reaction). Protects DNA from damage in the presence of FeSO(4) and H(2)O(2). May function in iron storage. Its function is as follows. May be involved in entry into human Schwann cells. In Mycobacterium leprae (strain TN), this protein is DNA-binding protein HupB.